A 282-amino-acid chain; its full sequence is ATP synthase gamma chain (282 aa).

Belongs to the ATPase gamma chain family. In terms of assembly, F-type ATPases have 2 components, CF(1) - the catalytic core - and CF(0) - the membrane proton channel. CF(1) has five subunits: alpha(3), beta(3), gamma(1), delta(1), epsilon(1). CF(0) has three main subunits: a, b and c.

The protein resides in the cell membrane. Functionally, produces ATP from ADP in the presence of a proton gradient across the membrane. The gamma chain is believed to be important in regulating ATPase activity and the flow of protons through the CF(0) complex. This is ATP synthase gamma chain from Clostridium botulinum (strain Okra / Type B1).